A 478-amino-acid polypeptide reads, in one-letter code: Catalase easC (478 aa).

His-54 is an active-site residue. Heme is bound at residue Tyr-343. Residues Val-459–Leu-478 are disordered.

It belongs to the catalase family. It depends on heme as a cofactor.

It functions in the pathway alkaloid biosynthesis; ergot alkaloid biosynthesis. In terms of biological role, catalase; part of the gene cluster that mediates the biosynthesis of fungal ergot alkaloid. DmaW catalyzes the first step of ergot alkaloid biosynthesis by condensing dimethylallyl diphosphate (DMAP) and tryptophan to form 4-dimethylallyl-L-tryptophan. The second step is catalyzed by the methyltransferase easF that methylates 4-dimethylallyl-L-tryptophan in the presence of S-adenosyl-L-methionine, resulting in the formation of 4-dimethylallyl-L-abrine. The catalase easC and the FAD-dependent oxidoreductase easE then transform 4-dimethylallyl-L-abrine to chanoclavine-I which is further oxidized by easD in the presence of NAD(+), resulting in the formation of chanoclavine-I aldehyde. Chanoclavine-I aldehyde is the precursor of ergoamides and ergopeptines in Clavicipitaceae, and clavine-type alcaloids such as fumiclavine in Trichocomaceae. However, the metabolites downstream of chanoclavine-I aldehyde in Arthrodermataceae have not been identified yet. The polypeptide is Catalase easC (Trichophyton verrucosum (strain HKI 0517)).